The primary structure comprises 294 residues: Bifunctional protein FolD (294 aa).

Residues G166 to S168, S191, and I232 contribute to the NADP(+) site.

The protein belongs to the tetrahydrofolate dehydrogenase/cyclohydrolase family. As to quaternary structure, homodimer.

It catalyses the reaction (6R)-5,10-methylene-5,6,7,8-tetrahydrofolate + NADP(+) = (6R)-5,10-methenyltetrahydrofolate + NADPH. The enzyme catalyses (6R)-5,10-methenyltetrahydrofolate + H2O = (6R)-10-formyltetrahydrofolate + H(+). Its pathway is one-carbon metabolism; tetrahydrofolate interconversion. Catalyzes the oxidation of 5,10-methylenetetrahydrofolate to 5,10-methenyltetrahydrofolate and then the hydrolysis of 5,10-methenyltetrahydrofolate to 10-formyltetrahydrofolate. The protein is Bifunctional protein FolD of Afipia carboxidovorans (strain ATCC 49405 / DSM 1227 / KCTC 32145 / OM5) (Oligotropha carboxidovorans).